The sequence spans 325 residues: Ribose-phosphate pyrophosphokinase 4 (325 aa).

Asp-145 and His-147 together coordinate Mg(2+). The segment at 228 to 243 (GRHVVIVDDLVQSGGT) is binding of phosphoribosylpyrophosphate.

It belongs to the ribose-phosphate pyrophosphokinase family. Requires Mg(2+) as cofactor.

The catalysed reaction is D-ribose 5-phosphate + ATP = 5-phospho-alpha-D-ribose 1-diphosphate + AMP + H(+). This is Ribose-phosphate pyrophosphokinase 4 from Oryza sativa subsp. japonica (Rice).